We begin with the raw amino-acid sequence, 356 residues long: Cytochrome b translation regulator cbp7 (356 aa).

In terms of assembly, component of a complex, at least composed of cbp7 and cbp8.

It localises to the mitochondrion. In terms of biological role, translation factor for cob1/cytochrome b; plays a role in cob1 mRNA stabilization and required for correct folding of the protein. The protein is Cytochrome b translation regulator cbp7 of Schizosaccharomyces pombe (strain 972 / ATCC 24843) (Fission yeast).